The chain runs to 111 residues: Small ribosomal subunit protein uS10 (111 aa).

The protein belongs to the universal ribosomal protein uS10 family. In terms of assembly, part of the 30S ribosomal subunit.

In terms of biological role, involved in the binding of tRNA to the ribosomes. In Ehrlichia ruminantium (strain Welgevonden), this protein is Small ribosomal subunit protein uS10.